A 439-amino-acid chain; its full sequence is Xylose isomerase (439 aa).

Active-site residues include H98 and D101. Mg(2+) contacts are provided by E229, E265, H268, D293, D304, D306, and D335.

The protein belongs to the xylose isomerase family. As to quaternary structure, homotetramer. The cofactor is Mg(2+).

The protein resides in the cytoplasm. It carries out the reaction alpha-D-xylose = alpha-D-xylulofuranose. Functionally, involved in D-xylose catabolism. This Staphylococcus xylosus protein is Xylose isomerase (xylA).